The sequence spans 33 residues: Photosystem II reaction center protein T (33 aa).

Residues 3–23 (ALVYTFLLVSTLGIIFFAIFF) form a helical membrane-spanning segment.

Belongs to the PsbT family. As to quaternary structure, PSII is composed of 1 copy each of membrane proteins PsbA, PsbB, PsbC, PsbD, PsbE, PsbF, PsbH, PsbI, PsbJ, PsbK, PsbL, PsbM, PsbT, PsbY, PsbZ, Psb30/Ycf12, at least 3 peripheral proteins of the oxygen-evolving complex and a large number of cofactors. It forms dimeric complexes.

The protein resides in the plastid. It localises to the chloroplast thylakoid membrane. Its function is as follows. Found at the monomer-monomer interface of the photosystem II (PS II) dimer, plays a role in assembly and dimerization of PSII. PSII is a light-driven water plastoquinone oxidoreductase, using light energy to abstract electrons from H(2)O, generating a proton gradient subsequently used for ATP formation. This is Photosystem II reaction center protein T from Asparagus officinalis (Garden asparagus).